Consider the following 408-residue polypeptide: NADH-quinone oxidoreductase subunit D (408 aa).

This sequence belongs to the complex I 49 kDa subunit family. NDH-1 is composed of 14 different subunits. Subunits NuoB, C, D, E, F, and G constitute the peripheral sector of the complex.

It is found in the cell inner membrane. It catalyses the reaction a quinone + NADH + 5 H(+)(in) = a quinol + NAD(+) + 4 H(+)(out). Functionally, NDH-1 shuttles electrons from NADH, via FMN and iron-sulfur (Fe-S) centers, to quinones in the respiratory chain. The immediate electron acceptor for the enzyme in this species is believed to be ubiquinone. Couples the redox reaction to proton translocation (for every two electrons transferred, four hydrogen ions are translocated across the cytoplasmic membrane), and thus conserves the redox energy in a proton gradient. The sequence is that of NADH-quinone oxidoreductase subunit D from Wolinella succinogenes (strain ATCC 29543 / DSM 1740 / CCUG 13145 / JCM 31913 / LMG 7466 / NCTC 11488 / FDC 602W) (Vibrio succinogenes).